Reading from the N-terminus, the 176-residue chain is B9 domain-containing protein 2 (176 aa).

The region spanning 2 to 118 is the C2 B9-type domain; that stretch reads AEVHIIGQII…LSPTWRPLGT (117 aa).

This sequence belongs to the B9D family. As to quaternary structure, part of the tectonic-like complex (also named B9 complex).

The protein localises to the cytoplasm. It localises to the cytoskeleton. The protein resides in the cilium basal body. Its subcellular location is the cilium axoneme. In terms of biological role, component of the tectonic-like complex, a complex localized at the transition zone of primary cilia and acting as a barrier that prevents diffusion of transmembrane proteins between the cilia and plasma membranes. This Xenopus laevis (African clawed frog) protein is B9 domain-containing protein 2 (b9d2).